Consider the following 600-residue polypeptide: CoA ligase FVEG_12633 (600 aa).

Residues 170-174, His-214, 321-323, and 342-343 each bind ATP; these read TSGTT, AAL, and ER. Residues 241-342 are SBD1; sequence NSVWTRLAAP…QLTGGNVLLE (102 aa). An SBD2 region spans residues 343–420; that stretch reads RYGMTEVGMA…LRGPTVFTGY (78 aa). Met-346 lines the substrate pocket. ATP is bound by residues Thr-347, Asp-441, Arg-471, and Lys-564. Lys-564 contacts oxalate.

Belongs to the ATP-dependent AMP-binding enzyme family.

In terms of biological role, coA ligase; part of the Fusarium detoxification of benzoxazolinone cluster 2 (FDB2) involved in the degradation of benzoxazolinones produced by the host plant. Maize, wheat, and rye produce the 2 benzoxazinone phytoanticipins 2,4-dihy-droxy-7-methoxy-1,4-benzoxazin-3-one (DIMBOA) and 2,4-dihydroxy-1,4-benzoxazin-3-one (DIBOA) that, due to their inherent instability once released, spontaneously degrade to the more stable corresponding benzoxazolinones, 6-methoxy-2-benzoxazolinone (MBOA) and 2-benzoxazolinone (BOA), respectively. The first step in the detoxification of benzoxazolinones involves the hydrolysis of the cyclic ester bond of benzoxazolinones by the FDB1 cluster gamma-lactamase MBL1 to aminophenols. MBL1 is able to convert BOA into 2-aminophenol (2-AP), as well as MBOA into 5-methoxy-2-aminophenol (2-AMP). The FDB2 cluster N-malonyltransferase FDB2/NAT1 then metabolizes aminophenols via N-malonylation to non-toxic malonamic acids. FDB2/NAT1 converts 2-AP into N-(2-hydroxyphenyl) malonamic acid (HPMA) and 2-AMP into N-(2-hydroxy-4-methoxyphenyl) malonamic acid (HMPMA). The duplicated dienlactone hydrolases DLH1 and DLH2 may provide redundant function for hydrolyzing the lactone moiety in the BOA molecule. The roles of the amidases an other enzymes encoded by the 2 FDB clusters have not been identified so far. This Gibberella moniliformis (strain M3125 / FGSC 7600) (Maize ear and stalk rot fungus) protein is CoA ligase FVEG_12633.